The primary structure comprises 709 residues: Elongation factor G (709 aa).

Residues 9–295 enclose the tr-type G domain; sequence AKVRNIGIMA…AVVRYLPTPL (287 aa). Residues 18 to 25, 86 to 90, and 140 to 143 each bind GTP; these read AHIDAGKT, DTPGH, and NKLD.

This sequence belongs to the TRAFAC class translation factor GTPase superfamily. Classic translation factor GTPase family. EF-G/EF-2 subfamily.

It is found in the cytoplasm. In terms of biological role, catalyzes the GTP-dependent ribosomal translocation step during translation elongation. During this step, the ribosome changes from the pre-translocational (PRE) to the post-translocational (POST) state as the newly formed A-site-bound peptidyl-tRNA and P-site-bound deacylated tRNA move to the P and E sites, respectively. Catalyzes the coordinated movement of the two tRNA molecules, the mRNA and conformational changes in the ribosome. The protein is Elongation factor G of Streptomyces avermitilis (strain ATCC 31267 / DSM 46492 / JCM 5070 / NBRC 14893 / NCIMB 12804 / NRRL 8165 / MA-4680).